The primary structure comprises 376 residues: Queuine tRNA-ribosyltransferase (376 aa).

The active-site Proton acceptor is aspartate 89. Substrate is bound by residues 89–93 (DSGGF), aspartate 143, glutamine 187, and glycine 214. Residues 245 to 251 (GVGKPQD) are RNA binding. The active-site Nucleophile is the aspartate 264. The segment at 269–273 (TRNAR) is RNA binding; important for wobble base 34 recognition. 4 residues coordinate Zn(2+): cysteine 302, cysteine 304, cysteine 307, and histidine 333.

The protein belongs to the queuine tRNA-ribosyltransferase family. Homodimer. Within each dimer, one monomer is responsible for RNA recognition and catalysis, while the other monomer binds to the replacement base PreQ1. The cofactor is Zn(2+).

It catalyses the reaction 7-aminomethyl-7-carbaguanine + guanosine(34) in tRNA = 7-aminomethyl-7-carbaguanosine(34) in tRNA + guanine. It functions in the pathway tRNA modification; tRNA-queuosine biosynthesis. In terms of biological role, catalyzes the base-exchange of a guanine (G) residue with the queuine precursor 7-aminomethyl-7-deazaguanine (PreQ1) at position 34 (anticodon wobble position) in tRNAs with GU(N) anticodons (tRNA-Asp, -Asn, -His and -Tyr). Catalysis occurs through a double-displacement mechanism. The nucleophile active site attacks the C1' of nucleotide 34 to detach the guanine base from the RNA, forming a covalent enzyme-RNA intermediate. The proton acceptor active site deprotonates the incoming PreQ1, allowing a nucleophilic attack on the C1' of the ribose to form the product. After dissociation, two additional enzymatic reactions on the tRNA convert PreQ1 to queuine (Q), resulting in the hypermodified nucleoside queuosine (7-(((4,5-cis-dihydroxy-2-cyclopenten-1-yl)amino)methyl)-7-deazaguanosine). This Erwinia tasmaniensis (strain DSM 17950 / CFBP 7177 / CIP 109463 / NCPPB 4357 / Et1/99) protein is Queuine tRNA-ribosyltransferase.